Reading from the N-terminus, the 486-residue chain is Glutamyl-tRNA(Gln) amidotransferase subunit A (486 aa).

Residues lysine 78 and serine 153 each act as charge relay system in the active site. Serine 177 functions as the Acyl-ester intermediate in the catalytic mechanism.

This sequence belongs to the amidase family. GatA subfamily. Heterotrimer of A, B and C subunits.

It carries out the reaction L-glutamyl-tRNA(Gln) + L-glutamine + ATP + H2O = L-glutaminyl-tRNA(Gln) + L-glutamate + ADP + phosphate + H(+). Its function is as follows. Allows the formation of correctly charged Gln-tRNA(Gln) through the transamidation of misacylated Glu-tRNA(Gln) in organisms which lack glutaminyl-tRNA synthetase. The reaction takes place in the presence of glutamine and ATP through an activated gamma-phospho-Glu-tRNA(Gln). The polypeptide is Glutamyl-tRNA(Gln) amidotransferase subunit A (Desulfosudis oleivorans (strain DSM 6200 / JCM 39069 / Hxd3) (Desulfococcus oleovorans)).